A 320-amino-acid polypeptide reads, in one-letter code: MLNDLKLSLQYILPKLWLTRLAGWGASKRAGWLTKLVIDLFVKYYKVDMKEAQKPDTAAYRTFNDFFVRPLRDDVRPLNTDPNVLVMPADGVISQLGAIEDDKILQAKGHDYSLEALLAGNYQMAGLFRNGSFATTYLSPRDYHRVHMPCNGILREMIYVPGDLFSVNHLTAQNVPNLFARNERVICLFDTEFGPMAQILVGATIVGSIETVWSGTVTPPREGIIKRWTWPAGDSEGSVALLKGQEMGRFKLGSTVINLFAPGQVKLVDSLQSLSVTKIGQPLATAVEASTAAEPAPLPEEEIRAEHRASPLVDDTQDQG.

Active-site charge relay system; for autoendoproteolytic cleavage activity residues include Asp90, His147, and Ser254. Residue Ser254 is the Schiff-base intermediate with substrate; via pyruvic acid; for decarboxylase activity of the active site. At Ser254 the chain carries Pyruvic acid (Ser); by autocatalysis. Residues 288–320 (EASTAAEPAPLPEEEIRAEHRASPLVDDTQDQG) form a disordered region.

This sequence belongs to the phosphatidylserine decarboxylase family. PSD-B subfamily. Prokaryotic type I sub-subfamily. Heterodimer of a large membrane-associated beta subunit and a small pyruvoyl-containing alpha subunit. Pyruvate serves as cofactor. In terms of processing, is synthesized initially as an inactive proenzyme. Formation of the active enzyme involves a self-maturation process in which the active site pyruvoyl group is generated from an internal serine residue via an autocatalytic post-translational modification. Two non-identical subunits are generated from the proenzyme in this reaction, and the pyruvate is formed at the N-terminus of the alpha chain, which is derived from the carboxyl end of the proenzyme. The autoendoproteolytic cleavage occurs by a canonical serine protease mechanism, in which the side chain hydroxyl group of the serine supplies its oxygen atom to form the C-terminus of the beta chain, while the remainder of the serine residue undergoes an oxidative deamination to produce ammonia and the pyruvoyl prosthetic group on the alpha chain. During this reaction, the Ser that is part of the protease active site of the proenzyme becomes the pyruvoyl prosthetic group, which constitutes an essential element of the active site of the mature decarboxylase.

It is found in the cell membrane. The enzyme catalyses a 1,2-diacyl-sn-glycero-3-phospho-L-serine + H(+) = a 1,2-diacyl-sn-glycero-3-phosphoethanolamine + CO2. Its pathway is phospholipid metabolism; phosphatidylethanolamine biosynthesis; phosphatidylethanolamine from CDP-diacylglycerol: step 2/2. Its function is as follows. Catalyzes the formation of phosphatidylethanolamine (PtdEtn) from phosphatidylserine (PtdSer). The protein is Phosphatidylserine decarboxylase proenzyme of Klebsiella pneumoniae (strain 342).